Reading from the N-terminus, the 351-residue chain is C-X-C chemokine receptor type 1 (351 aa).

Topologically, residues 1-46 are extracellular; the sequence is MSNATDPQMGDDDYDLNFTGMPPTDEDYSPCRLETQSLNKYVVIVT. Asn3 and Asn17 each carry an N-linked (GlcNAc...) asparagine glycan. Residues 47–67 traverse the membrane as a helical segment; that stretch reads YALVFLLSLLGNSLVMLVILY. Residues 68–76 lie on the Cytoplasmic side of the membrane; it reads RRVGRSVTD. Residues 77 to 97 form a helical membrane-spanning segment; that stretch reads VYLLNLAMADLLFALTLPIWA. Residues 98 to 112 are Extracellular-facing; sequence ASKVNGWIFGTFLCK. A disulfide bridge connects residues Cys111 and Cys188. Residues 113-133 form a helical membrane-spanning segment; sequence VVSLLKEVNFYSGILLLACIS. Topologically, residues 134–154 are cytoplasmic; the sequence is VDRYLAIVHATRTLIQKRHSV. The helical transmembrane segment at 155-175 threads the bilayer; that stretch reads KFVCLSCWGLSVILSLPFFLF. The Extracellular portion of the chain corresponds to 176-204; the sequence is RQAYHPNNSTPVCYEVLGNDTAKWRMVLR. Asn182 and Asn194 each carry an N-linked (GlcNAc...) asparagine glycan. A helical membrane pass occupies residues 205–225; it reads ILPHTFGFTLPLLIMLFCYGF. The Cytoplasmic portion of the chain corresponds to 226-243; the sequence is TLHTLFKAHIGQKHRAMR. A helical transmembrane segment spans residues 244–264; the sequence is VIFAVVLIFLLCWLPYNLVLL. The Extracellular portion of the chain corresponds to 265 to 289; sequence ADTLMRTHLIKESCERRNDIGRALD. Residues 290–310 form a helical membrane-spanning segment; that stretch reads ATEILGFLHSCLNPIIYAFIG. The Cytoplasmic portion of the chain corresponds to 311-351; that stretch reads QNFRHGFLKILATHGLVSKEFLARHHVTSYTSSSVNVSSNL.

It belongs to the G-protein coupled receptor 1 family. As to quaternary structure, interacts with IL8. Interacts with GNAI2.

It localises to the cell membrane. In terms of biological role, receptor to interleukin-8, which is a powerful neutrophils chemotactic factor. Binding of IL-8 to the receptor causes activation of neutrophils. This response is mediated via a G-protein that activates a phosphatidylinositol-calcium second messenger system. The protein is C-X-C chemokine receptor type 1 (CXCR1) of Macaca mulatta (Rhesus macaque).